Here is a 332-residue protein sequence, read N- to C-terminus: L-lactate dehydrogenase A chain (332 aa).

NAD(+) contacts are provided by residues 29–57 (GAVG…VEDK) and R99. Residues R106, N138, and R169 each contribute to the substrate site. Residue N138 participates in NAD(+) binding. H193 serves as the catalytic Proton acceptor. A substrate-binding site is contributed by T248.

It belongs to the LDH/MDH superfamily. LDH family. As to quaternary structure, homotetramer.

Its subcellular location is the cytoplasm. It carries out the reaction (S)-lactate + NAD(+) = pyruvate + NADH + H(+). Its pathway is fermentation; pyruvate fermentation to lactate; (S)-lactate from pyruvate: step 1/1. Its function is as follows. Interconverts simultaneously and stereospecifically pyruvate and lactate with concomitant interconversion of NADH and NAD(+). The protein is L-lactate dehydrogenase A chain (LDHA) of Alligator mississippiensis (American alligator).